The sequence spans 444 residues: Enolase (444 aa).

Ser40 is a binding site for Mg(2+). Ser40 is modified (phosphoserine). The short motif at 102 to 106 is the Pentapeptide insert element; that stretch reads EWGWS. Lys131 carries the post-translational modification N6-acetyllysine. Lys136 is covalently cross-linked (Glycyl lysine isopeptide (Lys-Gly) (interchain with G-Cter in ubiquitin)). Tyr137 carries the phosphotyrosine modification. The substrate site is built by His164 and Glu173. Catalysis depends on Glu216, which acts as the Proton donor. Asp251 is a binding site for Mg(2+). A DKSLVK motif motif is present at residues 275–280; that stretch reads DKSLVK. Glu302 and Asp329 together coordinate Mg(2+). Glu302 and Asp329 together coordinate substrate. The residue at position 337 (Thr337) is a Phosphothreonine. The active-site Proton acceptor is Lys354. Lys373 carries the N6-acetyllysine modification. Residues 381–384 and Lys405 contribute to the substrate site; that span reads SHRS.

It belongs to the enolase family. In terms of assembly, homodimer. Forms a complex at least composed of DegP, ENO and HSP70. Interacts with G-actin. Interacts (via the DKSLVK motif) with mammalian host PLG/plasminogen (present in the mosquito blood meal); the interaction occurs at the ookinete cell surface and is required for ookinete invasion of the mosquito midgut. Interacts with A.gambiae EBP; depending on the Plasmodium species, the interaction is either involved in ookinete invasion of the mosquito midgut (P.berghei) or is dispensable (P.falciparum). The cofactor is Mg(2+).

It localises to the cytoplasm. It is found in the nucleus. The protein localises to the cytoskeleton. Its subcellular location is the cell surface. The protein resides in the cell membrane. It localises to the vacuole. The catalysed reaction is (2R)-2-phosphoglycerate = phosphoenolpyruvate + H2O. It functions in the pathway carbohydrate degradation; glycolysis; pyruvate from D-glyceraldehyde 3-phosphate: step 4/5. Functionally, glycolytic enzyme that catalyzes the conversion of 2-phosphoglycerate to phosphoenolpyruvate. In addition to glycolysis, involved in various processes such as parasite development and invasion. Plays an essential role during ookinete invasion of the mosquito vector midgut by mediating the interaction of the ookinete with the midgut epithelium and, further, by binding to mammalian host plasminogen in the blood meal, whose conversion to active plasmin promotes the invasion process. This Plasmodium yoelii yoelii protein is Enolase.